The sequence spans 492 residues: Histone-lysine N-methyltransferase ASHH1 (492 aa).

The AWS domain maps to 36–87 (EDISICECKFDFGDPDSACGERCLNVITNTECTPGYCPCGVYCKNQKFQKCE). The region spanning 84–206 (QKCEYAKTKL…PRTELAYDYN (123 aa)) is the SET domain. Positions 213–229 (AKVRCLCGAVACSGFLG) constitute a Post-SET domain. The segment at 259–340 (SAEDELTSEP…NSQEDSSPKT (82 aa)) is disordered. Residues 266–275 (SEPSKNGESN) show a composition bias toward polar residues. A compositionally biased stretch (basic and acidic residues) spans 277–290 (NEEKEKDISTENHL). Polar residues predominate over residues 291–306 (ESTALNIQQQSDSTPT). Residues 317–326 (VKTETSEDMK) show a composition bias toward basic and acidic residues. A compositionally biased stretch (polar residues) spans 328–339 (LSQNSQEDSSPK).

Belongs to the class V-like SAM-binding methyltransferase superfamily. Histone-lysine methyltransferase family. SET2 subfamily.

The protein localises to the nucleus. Its subcellular location is the chromosome. The protein resides in the centromere. It catalyses the reaction L-lysyl(4)-[histone H3] + 3 S-adenosyl-L-methionine = N(6),N(6),N(6)-trimethyl-L-lysyl(4)-[histone H3] + 3 S-adenosyl-L-homocysteine + 3 H(+). Functionally, histone methyltransferase involved in regulation of flowering time. Required for the expression of the SOC1/AGL20 gene. Required for histone H3 trimethylation on 'Lys-4' (H3K4me3) at the SOC1 locus. Prevents trimethylation on 'Lys-27' (H3K27me3) at the same locus. In Arabidopsis thaliana (Mouse-ear cress), this protein is Histone-lysine N-methyltransferase ASHH1 (ASHH1).